Reading from the N-terminus, the 167-residue chain is uncharacterized protein (167 aa).

Residues M1–D148 enclose the N-acetyltransferase domain.

This sequence belongs to the acetyltransferase family.

This is an uncharacterized protein from Escherichia coli O157:H7.